The sequence spans 556 residues: Formate--tetrahydrofolate ligase (556 aa).

Residue 65 to 72 participates in ATP binding; it reads TPAGEGKS.

It belongs to the formate--tetrahydrofolate ligase family.

The enzyme catalyses (6S)-5,6,7,8-tetrahydrofolate + formate + ATP = (6R)-10-formyltetrahydrofolate + ADP + phosphate. It functions in the pathway one-carbon metabolism; tetrahydrofolate interconversion. The sequence is that of Formate--tetrahydrofolate ligase from Streptococcus uberis (strain ATCC BAA-854 / 0140J).